Reading from the N-terminus, the 173-residue chain is Streptothricin acetyltransferase A (173 aa).

In terms of domain architecture, N-acetyltransferase spans 21–173 (VVFGRMIPAF…EIAIFWYYKF (153 aa)).

The protein belongs to the acetyltransferase family. GNAT subfamily. Homodimer.

The enzyme catalyses streptothricin D + acetyl-CoA = N(beta)-acetylstreptothricin D + CoA + H(+). It carries out the reaction streptothricin F + acetyl-CoA = N(beta)-acetylstreptothricin F + CoA + H(+). In terms of biological role, involved in resistance to streptothricin, a broad-spectrum antibiotic produced by streptomycetes. Detoxifies streptothricin via acetylation of the beta amino group of the first beta-lysyl moiety of streptothricin. In Bacillus subtilis (strain 168), this protein is Streptothricin acetyltransferase A.